An 83-amino-acid polypeptide reads, in one-letter code: Short neurotoxin 3FTx-Oxy3 (83 aa).

Positions 1 to 21 (MKTLLLTLVVVTIVCLDLGYT) are cleaved as a signal peptide. Cystine bridges form between Cys-24-Cys-45, Cys-38-Cys-62, Cys-64-Cys-75, and Cys-76-Cys-81.

Belongs to the three-finger toxin family. Short-chain subfamily. Type I alpha-neurotoxin sub-subfamily. In terms of tissue distribution, expressed by the venom gland.

It is found in the secreted. Functionally, binds to muscle nicotinic acetylcholine receptor (nAChR) and inhibit acetylcholine from binding to the receptor, thereby impairing neuromuscular transmission. This chain is Short neurotoxin 3FTx-Oxy3, found in Oxyuranus microlepidotus (Inland taipan).